Consider the following 131-residue polypeptide: C-type natriuretic peptide 1 (131 aa).

An N-terminal signal peptide occupies residues 1–22; the sequence is MLCPVLLCATLLLLTPFEVTEA. Residues 23–109 constitute a propeptide that is removed on maturation; that stretch reads RALHPSADAV…KRAEPDRSRR (87 aa). Cys115 and Cys131 are oxidised to a cystine.

This sequence belongs to the natriuretic peptide family. Brain and spinal cord.

It is found in the secreted. Its function is as follows. Exhibits natriuretic and vasodepressant activity. Has cGMP-stimulating activity. May help to regulate body fluid homeostasis in a variety of aquatic environments. This chain is C-type natriuretic peptide 1, found in Oryzias latipes (Japanese rice fish).